Reading from the N-terminus, the 293-residue chain is Ribosomal protein L11 methyltransferase (293 aa).

S-adenosyl-L-methionine is bound by residues threonine 145, glycine 166, aspartate 188, and asparagine 230.

It belongs to the methyltransferase superfamily. PrmA family.

It localises to the cytoplasm. It catalyses the reaction L-lysyl-[protein] + 3 S-adenosyl-L-methionine = N(6),N(6),N(6)-trimethyl-L-lysyl-[protein] + 3 S-adenosyl-L-homocysteine + 3 H(+). Its function is as follows. Methylates ribosomal protein L11. The sequence is that of Ribosomal protein L11 methyltransferase from Shewanella frigidimarina (strain NCIMB 400).